Here is a 287-residue protein sequence, read N- to C-terminus: ATP synthase gamma chain (287 aa).

This sequence belongs to the ATPase gamma chain family. As to quaternary structure, F-type ATPases have 2 components, CF(1) - the catalytic core - and CF(0) - the membrane proton channel. CF(1) has five subunits: alpha(3), beta(3), gamma(1), delta(1), epsilon(1). CF(0) has three main subunits: a, b and c.

Its subcellular location is the cell inner membrane. Produces ATP from ADP in the presence of a proton gradient across the membrane. The gamma chain is believed to be important in regulating ATPase activity and the flow of protons through the CF(0) complex. The protein is ATP synthase gamma chain of Klebsiella pneumoniae (strain 342).